We begin with the raw amino-acid sequence, 255 residues long: Zinc import ATP-binding protein ZnuC 1 (255 aa).

Residues 7–220 (IRLQDVTVKI…PAFINLFGTQ (214 aa)) form the ABC transporter domain. An ATP-binding site is contributed by 39–46 (GPNGAGKS). The segment at 229–255 (HHHHDHHHHTDGTVAAGSECSHGDQHA) is disordered.

Belongs to the ABC transporter superfamily. Zinc importer (TC 3.A.1.15.5) family. The complex is composed of two ATP-binding proteins (ZnuC), two transmembrane proteins (ZnuB) and a solute-binding protein (ZnuA).

The protein localises to the cell inner membrane. It carries out the reaction Zn(2+)(out) + ATP(in) + H2O(in) = Zn(2+)(in) + ADP(in) + phosphate(in) + H(+)(in). In terms of biological role, part of the ABC transporter complex ZnuABC involved in zinc import. Responsible for energy coupling to the transport system. This chain is Zinc import ATP-binding protein ZnuC 1, found in Hahella chejuensis (strain KCTC 2396).